Reading from the N-terminus, the 443-residue chain is Exodeoxyribonuclease 7 large subunit (443 aa).

This sequence belongs to the XseA family. Heterooligomer composed of large and small subunits.

The protein resides in the cytoplasm. It carries out the reaction Exonucleolytic cleavage in either 5'- to 3'- or 3'- to 5'-direction to yield nucleoside 5'-phosphates.. In terms of biological role, bidirectionally degrades single-stranded DNA into large acid-insoluble oligonucleotides, which are then degraded further into small acid-soluble oligonucleotides. The sequence is that of Exodeoxyribonuclease 7 large subunit from Vibrio parahaemolyticus serotype O3:K6 (strain RIMD 2210633).